Consider the following 723-residue polypeptide: Catalase-peroxidase (723 aa).

The tryptophyl-tyrosyl-methioninium (Trp-Tyr) (with M-251) cross-link spans 97 to 225 (WHAAGSYRVT…LAAVQMGLIY (129 aa)). Residue His98 is the Proton acceptor of the active site. A cross-link (tryptophyl-tyrosyl-methioninium (Tyr-Met) (with W-97)) is located at residues 225–251 (YVNPEGVNGKSDPLATAAQMRETFARM). His266 contributes to the heme b binding site.

Belongs to the peroxidase family. Peroxidase/catalase subfamily. Homodimer or homotetramer. Heme b is required as a cofactor. In terms of processing, formation of the three residue Trp-Tyr-Met cross-link is important for the catalase, but not the peroxidase activity of the enzyme.

The enzyme catalyses H2O2 + AH2 = A + 2 H2O. The catalysed reaction is 2 H2O2 = O2 + 2 H2O. In terms of biological role, bifunctional enzyme with both catalase and broad-spectrum peroxidase activity. Involved in tumorigenesis. This Rhizobium radiobacter (Agrobacterium tumefaciens) protein is Catalase-peroxidase.